Reading from the N-terminus, the 217-residue chain is Probable GTP-binding protein EngB (217 aa).

Residues 37–214 (DGVEIAFAGR…RAAMAKLLEE (178 aa)) form the EngB-type G domain. Residues 45–52 (GRSNVGKS), 72–76 (GRTQE), 92–95 (DMPG), 159–162 (TKAD), and 193–195 (TSS) contribute to the GTP site. S52 and T74 together coordinate Mg(2+).

It belongs to the TRAFAC class TrmE-Era-EngA-EngB-Septin-like GTPase superfamily. EngB GTPase family. It depends on Mg(2+) as a cofactor.

Necessary for normal cell division and for the maintenance of normal septation. This Bradyrhizobium diazoefficiens (strain JCM 10833 / BCRC 13528 / IAM 13628 / NBRC 14792 / USDA 110) protein is Probable GTP-binding protein EngB.